We begin with the raw amino-acid sequence, 658 residues long: Probable replication factor A 73 kDa subunit (658 aa).

Disordered stretches follow at residues 134-155 and 169-222; these read PEVK…RPNI and SEFQ…TERG. A DNA-binding region (OB) is located at residues 236-326; sequence FRIHGMVSRK…TLRNDSVVEA (91 aa). The C4-type zinc finger occupies 518 to 539; the sequence is CASEGCQKKVIESDGEYRCEKC.

The protein belongs to the replication factor A protein 1 family. As to quaternary structure, component of the heterotrimeric canonical replication protein A complex (RPA).

The protein resides in the nucleus. As part of the heterotrimeric replication protein A complex (RPA/RP-A), binds and stabilizes single-stranded DNA intermediates, that form during DNA replication or upon DNA stress. It prevents their reannealing and in parallel, recruits and activates different proteins and complexes involved in DNA metabolism. Thereby, it plays an essential role both in DNA replication and the cellular response to DNA damage. This chain is Probable replication factor A 73 kDa subunit, found in Caenorhabditis briggsae.